A 431-amino-acid chain; its full sequence is MRLLVRPEEEELERVLRRSEMDVTEVLPDVERIFEDVVERGDEALLEYTERFDGVKLEAEDLRVSEDDFEVARELVDERTVEALEEAAHRIEEFHRKTLPRVDRITFDVEGTECGLTLRPIPRVGCYVPGGRAAYPSTALMTVIPARVAGCREVVVCTPPADNDVRASPEVLVAVEIAGADAVYRVGGAQAIAALAAGTETVLRVDKIVGPGNVYVTAAKLLAYSRGLTDVDMPAGPSEVFVIADDSANPDWLARDLIAQAEHDPHAAAVLATDSEEIARAVKERVEELLDAGIEREEIVLKALDRNGWIVVLDSLEECVRLANRYAPEHLQLCVENPEELLQDVENAGAVFVGHLTAVPFGDYATGPNHVLPTGGFARARGALGTWDFVKIIPIQRLREGDVERLAPIVEELAEREGLPNHAEAVRARRS.

NAD(+)-binding residues include Y127, Q190, and N213. S238, Q260, and H263 together coordinate substrate. Q260 and H263 together coordinate Zn(2+). Catalysis depends on proton acceptor residues E329 and H330. Residues H330, D363, E417, and H422 each coordinate substrate. D363 lines the Zn(2+) pocket. H422 contacts Zn(2+).

It belongs to the histidinol dehydrogenase family. Zn(2+) is required as a cofactor.

It carries out the reaction L-histidinol + 2 NAD(+) + H2O = L-histidine + 2 NADH + 3 H(+). Its pathway is amino-acid biosynthesis; L-histidine biosynthesis; L-histidine from 5-phospho-alpha-D-ribose 1-diphosphate: step 9/9. Catalyzes the sequential NAD-dependent oxidations of L-histidinol to L-histidinaldehyde and then to L-histidine. The sequence is that of Histidinol dehydrogenase from Methanopyrus kandleri (strain AV19 / DSM 6324 / JCM 9639 / NBRC 100938).